The sequence spans 438 residues: ATP-dependent protease ATPase subunit HslU (438 aa).

ATP is bound by residues I18, 60 to 65 (GVGKTE), D251, E316, and R388.

The protein belongs to the ClpX chaperone family. HslU subfamily. A double ring-shaped homohexamer of HslV is capped on each side by a ring-shaped HslU homohexamer. The assembly of the HslU/HslV complex is dependent on binding of ATP.

It is found in the cytoplasm. In terms of biological role, ATPase subunit of a proteasome-like degradation complex; this subunit has chaperone activity. The binding of ATP and its subsequent hydrolysis by HslU are essential for unfolding of protein substrates subsequently hydrolyzed by HslV. HslU recognizes the N-terminal part of its protein substrates and unfolds these before they are guided to HslV for hydrolysis. This is ATP-dependent protease ATPase subunit HslU from Jannaschia sp. (strain CCS1).